The primary structure comprises 98 residues: Aspartyl/glutamyl-tRNA(Asn/Gln) amidotransferase subunit C (98 aa).

The protein belongs to the GatC family. Heterotrimer of A, B and C subunits.

The enzyme catalyses L-glutamyl-tRNA(Gln) + L-glutamine + ATP + H2O = L-glutaminyl-tRNA(Gln) + L-glutamate + ADP + phosphate + H(+). The catalysed reaction is L-aspartyl-tRNA(Asn) + L-glutamine + ATP + H2O = L-asparaginyl-tRNA(Asn) + L-glutamate + ADP + phosphate + 2 H(+). Allows the formation of correctly charged Asn-tRNA(Asn) or Gln-tRNA(Gln) through the transamidation of misacylated Asp-tRNA(Asn) or Glu-tRNA(Gln) in organisms which lack either or both of asparaginyl-tRNA or glutaminyl-tRNA synthetases. The reaction takes place in the presence of glutamine and ATP through an activated phospho-Asp-tRNA(Asn) or phospho-Glu-tRNA(Gln). This chain is Aspartyl/glutamyl-tRNA(Asn/Gln) amidotransferase subunit C, found in Mycobacterium avium (strain 104).